The primary structure comprises 329 residues: 7,8-didemethyl-8-hydroxy-5-deazariboflavin synthase (329 aa).

The region spanning isoleucine 6–asparagine 244 is the Radical SAM core domain. Cysteine 20, cysteine 24, and cysteine 27 together coordinate [4Fe-4S] cluster.

Belongs to the radical SAM superfamily. CofG family. As to quaternary structure, consists of two subunits, CofG and CofH. [4Fe-4S] cluster is required as a cofactor.

It carries out the reaction 5-amino-5-(4-hydroxybenzyl)-6-(D-ribitylimino)-5,6-dihydrouracil + S-adenosyl-L-methionine = 7,8-didemethyl-8-hydroxy-5-deazariboflavin + 5'-deoxyadenosine + L-methionine + NH4(+) + H(+). It functions in the pathway cofactor biosynthesis; coenzyme F0 biosynthesis. Functionally, catalyzes the radical-mediated synthesis of 7,8-didemethyl-8-hydroxy-5-deazariboflavin from 5-amino-5-(4-hydroxybenzyl)-6-(D-ribitylimino)-5,6-dihydrouracil. This is 7,8-didemethyl-8-hydroxy-5-deazariboflavin synthase from Methanoregula boonei (strain DSM 21154 / JCM 14090 / 6A8).